The primary structure comprises 274 residues: Dermonecrotic toxin LspiSicTox-betaIII2 (274 aa).

Residue histidine 5 is part of the active site. Mg(2+)-binding residues include glutamate 25 and aspartate 27. Catalysis depends on histidine 41, which acts as the Nucleophile. Cystine bridges form between cysteine 45-cysteine 51 and cysteine 47-cysteine 189. Mg(2+) is bound at residue aspartate 85.

This sequence belongs to the arthropod phospholipase D family. Class II subfamily. It depends on Mg(2+) as a cofactor. As to expression, expressed by the venom gland.

It is found in the secreted. It catalyses the reaction an N-(acyl)-sphingosylphosphocholine = an N-(acyl)-sphingosyl-1,3-cyclic phosphate + choline. The catalysed reaction is an N-(acyl)-sphingosylphosphoethanolamine = an N-(acyl)-sphingosyl-1,3-cyclic phosphate + ethanolamine. It carries out the reaction a 1-acyl-sn-glycero-3-phosphocholine = a 1-acyl-sn-glycero-2,3-cyclic phosphate + choline. The enzyme catalyses a 1-acyl-sn-glycero-3-phosphoethanolamine = a 1-acyl-sn-glycero-2,3-cyclic phosphate + ethanolamine. Its function is as follows. Dermonecrotic toxins cleave the phosphodiester linkage between the phosphate and headgroup of certain phospholipids (sphingolipid and lysolipid substrates), forming an alcohol (often choline) and a cyclic phosphate. This toxin acts on sphingomyelin (SM). It may also act on ceramide phosphoethanolamine (CPE), lysophosphatidylcholine (LPC) and lysophosphatidylethanolamine (LPE), but not on lysophosphatidylserine (LPS), and lysophosphatidylglycerol (LPG). It acts by transphosphatidylation, releasing exclusively cyclic phosphate products as second products. Induces dermonecrosis, hemolysis, increased vascular permeability, edema, inflammatory response, and platelet aggregation. This Loxosceles spinulosa (Recluse spider) protein is Dermonecrotic toxin LspiSicTox-betaIII2.